The sequence spans 109 residues: Ubiquitin-related modifier 1 homolog (109 aa).

The residue at position 109 (G109) is a 1-thioglycine. Residue G109 forms a Glycyl lysine isopeptide (Gly-Lys) (interchain with K-? in acceptor proteins) linkage.

The protein belongs to the URM1 family. In terms of processing, C-terminal thiocarboxylation occurs in 2 steps, it is first acyl-adenylated (-COAMP) via the hesA/moeB/thiF part of the MOCS3 homolog, then thiocarboxylated (-COSH) via the rhodanese domain of the MOCS3 homolog.

The protein localises to the cytoplasm. It participates in tRNA modification; 5-methoxycarbonylmethyl-2-thiouridine-tRNA biosynthesis. Acts as a sulfur carrier required for 2-thiolation of mcm(5)S(2)U at tRNA wobble positions of cytosolic tRNA(Lys), tRNA(Glu) and tRNA(Gln). Serves as sulfur donor in tRNA 2-thiolation reaction by being thiocarboxylated (-COSH) at its C-terminus by MOCS3. The sulfur is then transferred to tRNA to form 2-thiolation of mcm(5)S(2)U. Also acts as a ubiquitin-like protein (UBL) that is covalently conjugated via an isopeptide bond to lysine residues of target proteins. The thiocarboxylated form serves as substrate for conjugation and oxidative stress specifically induces the formation of UBL-protein conjugates. This Anopheles gambiae (African malaria mosquito) protein is Ubiquitin-related modifier 1 homolog.